The following is a 143-amino-acid chain: 3-hydroxyacyl-[acyl-carrier-protein] dehydratase FabZ (143 aa).

Histidine 49 is an active-site residue.

The protein belongs to the thioester dehydratase family. FabZ subfamily.

It localises to the cytoplasm. It carries out the reaction a (3R)-hydroxyacyl-[ACP] = a (2E)-enoyl-[ACP] + H2O. In terms of biological role, involved in unsaturated fatty acids biosynthesis. Catalyzes the dehydration of short chain beta-hydroxyacyl-ACPs and long chain saturated and unsaturated beta-hydroxyacyl-ACPs. This is 3-hydroxyacyl-[acyl-carrier-protein] dehydratase FabZ from Wolbachia sp. subsp. Drosophila simulans (strain wRi).